Here is a 589-residue protein sequence, read N- to C-terminus: Sentrin-specific protease 2 (589 aa).

Residues Lys-28–Arg-31 carry the Nuclear localization signal motif. Residue Ser-32 is modified to Phosphoserine. The short motif at Pro-46–Arg-51 is the Nuclear localization signal element. Residues Gly-71–His-382 are axin-binding. Disordered stretches follow at residues Ser-148–Lys-179 and Glu-191–Lys-210. Positions Leu-317–Gly-332 match the Nuclear export signal motif. Residues Ser-333 and Ser-344 each carry the phosphoserine modification. A protease region spans residues Leu-395 to Ile-559. Catalysis depends on residues His-478 and Asp-495. The active-site Nucleophile is Cys-548.

Belongs to the peptidase C48 family. In terms of assembly, binds to SUMO2 and SUMO3. Interacts with the C-terminal domain of NUP153 via its N-terminus. Interacts with MTA1. Polyubiquitinated; which leads to proteasomal degradation.

Its subcellular location is the nucleus. The protein resides in the nuclear pore complex. It localises to the nucleus membrane. It is found in the cytoplasm. Functionally, protease that catalyzes two essential functions in the SUMO pathway. The first is the hydrolysis of an alpha-linked peptide bond at the C-terminal end of the small ubiquitin-like modifier (SUMO) propeptides, SUMO1, SUMO2 and SUMO3 leading to the mature form of the proteins. The second is the deconjugation of SUMO1, SUMO2 and SUMO3 from targeted proteins, by cleaving an epsilon-linked peptide bond between the C-terminal glycine of the mature SUMO and the lysine epsilon-amino group of the target protein. May down-regulate CTNNB1 levels and thereby modulate the Wnt pathway. Deconjugates SUMO2 from MTA1. Plays a dynamic role in adipogenesis by desumoylating and promoting the stabilization of CEBPB. Acts as a regulator of the cGAS-STING pathway by catalyzing desumoylation of CGAS and STING1 during the late phase of viral infection. This Pongo abelii (Sumatran orangutan) protein is Sentrin-specific protease 2 (SENP2).